We begin with the raw amino-acid sequence, 401 residues long: Imidazolonepropionase (401 aa).

Residues His-66 and His-68 each coordinate Fe(3+). Zn(2+) is bound by residues His-66 and His-68. 3 residues coordinate 4-imidazolone-5-propanoate: Arg-75, Tyr-138, and His-171. Residue Tyr-138 coordinates N-formimidoyl-L-glutamate. Position 236 (His-236) interacts with Fe(3+). His-236 lines the Zn(2+) pocket. Gln-239 provides a ligand contact to 4-imidazolone-5-propanoate. Asp-311 contributes to the Fe(3+) binding site. A Zn(2+)-binding site is contributed by Asp-311. The N-formimidoyl-L-glutamate site is built by Asn-313 and Gly-315. Thr-316 serves as a coordination point for 4-imidazolone-5-propanoate.

It belongs to the metallo-dependent hydrolases superfamily. HutI family. The cofactor is Zn(2+). It depends on Fe(3+) as a cofactor.

Its subcellular location is the cytoplasm. The catalysed reaction is 4-imidazolone-5-propanoate + H2O = N-formimidoyl-L-glutamate. The protein operates within amino-acid degradation; L-histidine degradation into L-glutamate; N-formimidoyl-L-glutamate from L-histidine: step 3/3. Its function is as follows. Catalyzes the hydrolytic cleavage of the carbon-nitrogen bond in imidazolone-5-propanoate to yield N-formimidoyl-L-glutamate. It is the third step in the universal histidine degradation pathway. This is Imidazolonepropionase from Acinetobacter baumannii (strain ATCC 17978 / DSM 105126 / CIP 53.77 / LMG 1025 / NCDC KC755 / 5377).